The chain runs to 120 residues: uncharacterized protein (120 aa).

Belongs to the asp23 family.

This is an uncharacterized protein from Bacillus subtilis (strain 168).